Here is a 380-residue protein sequence, read N- to C-terminus: Glucose-1-phosphate adenylyltransferase (380 aa).

Residues glycine 164, 179–180, and serine 190 contribute to the alpha-D-glucose 1-phosphate site; that span reads EK.

The protein belongs to the bacterial/plant glucose-1-phosphate adenylyltransferase family. Homotetramer.

It carries out the reaction alpha-D-glucose 1-phosphate + ATP + H(+) = ADP-alpha-D-glucose + diphosphate. It functions in the pathway glycan biosynthesis; glycogen biosynthesis. Involved in the biosynthesis of ADP-glucose, a building block required for the elongation reactions to produce glycogen. Catalyzes the reaction between ATP and alpha-D-glucose 1-phosphate (G1P) to produce pyrophosphate and ADP-Glc. In Ligilactobacillus salivarius (strain UCC118) (Lactobacillus salivarius), this protein is Glucose-1-phosphate adenylyltransferase.